The following is a 177-amino-acid chain: Large ribosomal subunit protein uL6 (177 aa).

Belongs to the universal ribosomal protein uL6 family. As to quaternary structure, part of the 50S ribosomal subunit.

This protein binds to the 23S rRNA, and is important in its secondary structure. It is located near the subunit interface in the base of the L7/L12 stalk, and near the tRNA binding site of the peptidyltransferase center. The protein is Large ribosomal subunit protein uL6 of Tolumonas auensis (strain DSM 9187 / NBRC 110442 / TA 4).